The sequence spans 473 residues: Photosystem II CP43 reaction center protein (473 aa).

Residues 1-14 constitute a propeptide that is removed on maturation; the sequence is MKTLYSLRRFYPVE. Position 15 is an N-acetylthreonine (threonine 15). Threonine 15 carries the phosphothreonine modification. 5 helical membrane-spanning segments follow: residues 69 to 93, 134 to 155, 178 to 200, 255 to 275, and 291 to 312; these read LFEV…PHLA, LLGP…KDRN, KALY…RKIT, KPFA…LSYS, and WFNN…ASQA. Glutamate 367 lines the [CaMn4O5] cluster pocket. A helical membrane pass occupies residues 447–471; the sequence is RARAAAAGFEKGIDRDFEPVLSMTP.

It belongs to the PsbB/PsbC family. PsbC subfamily. In terms of assembly, PSII is composed of 1 copy each of membrane proteins PsbA, PsbB, PsbC, PsbD, PsbE, PsbF, PsbH, PsbI, PsbJ, PsbK, PsbL, PsbM, PsbT, PsbX, PsbY, PsbZ, Psb30/Ycf12, at least 3 peripheral proteins of the oxygen-evolving complex and a large number of cofactors. It forms dimeric complexes. Requires Binds multiple chlorophylls and provides some of the ligands for the Ca-4Mn-5O cluster of the oxygen-evolving complex. It may also provide a ligand for a Cl- that is required for oxygen evolution. PSII binds additional chlorophylls, carotenoids and specific lipids. as cofactor.

Its subcellular location is the plastid. It is found in the chloroplast thylakoid membrane. Functionally, one of the components of the core complex of photosystem II (PSII). It binds chlorophyll and helps catalyze the primary light-induced photochemical processes of PSII. PSII is a light-driven water:plastoquinone oxidoreductase, using light energy to abstract electrons from H(2)O, generating O(2) and a proton gradient subsequently used for ATP formation. This Buxus microphylla (Littleleaf boxwood) protein is Photosystem II CP43 reaction center protein.